The sequence spans 39 residues: Photosystem II reaction center protein L (39 aa).

Residues 18 to 38 (SLYLGLLLVFVTAVLFTSYFF) traverse the membrane as a helical segment.

This sequence belongs to the PsbL family. PSII is composed of 1 copy each of membrane proteins PsbA, PsbB, PsbC, PsbD, PsbE, PsbF, PsbH, PsbI, PsbJ, PsbK, PsbL, PsbM, PsbT, PsbX, PsbY, Psb30/Ycf12, peripheral proteins PsbO, CyanoQ (PsbQ), PsbU, PsbV and a large number of cofactors. It forms dimeric complexes.

Its subcellular location is the cellular thylakoid membrane. In terms of biological role, one of the components of the core complex of photosystem II (PSII). PSII is a light-driven water:plastoquinone oxidoreductase that uses light energy to abstract electrons from H(2)O, generating O(2) and a proton gradient subsequently used for ATP formation. It consists of a core antenna complex that captures photons, and an electron transfer chain that converts photonic excitation into a charge separation. This subunit is found at the monomer-monomer interface and is required for correct PSII assembly and/or dimerization. This chain is Photosystem II reaction center protein L, found in Prochlorococcus marinus (strain MIT 9313).